We begin with the raw amino-acid sequence, 59 residues long: Large ribosomal subunit protein bL32 (59 aa).

Residues 1–24 (MAVQQNKKSPSKRGMHRSHDFLTS) are disordered.

The protein belongs to the bacterial ribosomal protein bL32 family.

This chain is Large ribosomal subunit protein bL32, found in Ralstonia nicotianae (strain ATCC BAA-1114 / GMI1000) (Ralstonia solanacearum).